The following is a 476-amino-acid chain: Cytosolic iron-sulfur assembly component 3 (476 aa).

Alanine 2 is modified (N-acetylalanine). Residues cysteine 24, cysteine 71, cysteine 74, cysteine 77, cysteine 190, and cysteine 246 each coordinate [4Fe-4S] cluster. Positions 297–316 (DGLTSSVSAEEPSSHRGGGS) are disordered. Residues cysteine 395 and cysteine 399 each contribute to the [4Fe-4S] cluster site.

This sequence belongs to the NARF family. In terms of assembly, external component of the CIA complex. In the CIA complex, interacts directly with CIAO1 and MMS19.

In terms of biological role, component of the cytosolic iron-sulfur protein assembly (CIA) complex, a multiprotein complex that mediates the incorporation of iron-sulfur cluster into extramitochondrial Fe/S proteins. Seems to negatively regulate the level of HIF1A expression, although this effect could be indirect. In Mus musculus (Mouse), this protein is Cytosolic iron-sulfur assembly component 3 (Ciao3).